A 691-amino-acid polypeptide reads, in one-letter code: MARTQAEPPASQPDARAAWLRDQLERANYAYYVLDQPDLPDAEYDRLFRELQQLETDHPELVTPDSPTQRVGGEAAGGFTPVVHDAPMLSLNNGFADEDIVAFDKRVADALAKATDLAGSVTDPVEYACELKFDGLAISLRYENGVFVQAATRGDGTTGEDVTENVRTIRSIPLKLKGKHVPAVLDVRGEVLMFKRDFARLNERQRAAEQREFANPRNAAAGSLRQLDSKITAQRPLSFFAYGIGVLDGMPMPDTHTALLDWYEAFGLPVNRERAVVHGAEGLLDFFRKVGEKRESLPYDIDGVVYKVNRRDEQERLGFVSRAPRFALAHKFPAQEALTKLVAIDVQVGRTGAITPVARLEPVFVGGATVTNATLHNEDEVRRKDIRIGDTVIVRRAGDVIPEVVGALLDRRPADAAEFVMPTECPVCGSKIERLPDEAIARCTGGLFCPAQRKQALWHFAQRRALDIDGLGEKIIDQLVELNLVRTPADLFNLGFATLAELDRFAEKSAQNLLDSLEKAKHTTLARFIYGLGIRHVGESTAKDLAKHFGSLTPIMDASIEELLEVNDVGPIVAESIHQFFAEEHNRTVIEQLRAPGKVTWPEGPPAPKAPQGVLAGKTVVLTGTLPNLTRDAAKEMLEAAGAKVAGSVSKKTDYVVAGAEAGSKLAKAEELGIPVLDEDGLHQLLEGNTP.

Residues 41 to 45, 90 to 91, and Glu130 contribute to the NAD(+) site; these read DAEYD and SL. Catalysis depends on Lys132, which acts as the N6-AMP-lysine intermediate. 4 residues coordinate NAD(+): Arg153, Glu190, Lys307, and Lys331. Zn(2+)-binding residues include Cys425, Cys428, Cys443, and Cys449. Positions 610–691 constitute a BRCT domain; that stretch reads APQGVLAGKT…LHQLLEGNTP (82 aa).

This sequence belongs to the NAD-dependent DNA ligase family. LigA subfamily. Mg(2+) is required as a cofactor. Mn(2+) serves as cofactor.

It catalyses the reaction NAD(+) + (deoxyribonucleotide)n-3'-hydroxyl + 5'-phospho-(deoxyribonucleotide)m = (deoxyribonucleotide)n+m + AMP + beta-nicotinamide D-nucleotide.. DNA ligase that catalyzes the formation of phosphodiester linkages between 5'-phosphoryl and 3'-hydroxyl groups in double-stranded DNA using NAD as a coenzyme and as the energy source for the reaction. It is essential for DNA replication and repair of damaged DNA. The polypeptide is DNA ligase (Burkholderia cenocepacia (strain ATCC BAA-245 / DSM 16553 / LMG 16656 / NCTC 13227 / J2315 / CF5610) (Burkholderia cepacia (strain J2315))).